The chain runs to 63 residues: Hyphancin-3D (63 aa).

An N-terminal signal peptide occupies residues 1–22; the sequence is MNFSRIIFLVFACFVALASVSA. A propeptide spans 23-26 (removed by a dipeptidylpeptidase); it reads APEP. Leucine amide is present on L61.

This sequence belongs to the cecropin family.

It is found in the secreted. Has antibacterial activity. This is Hyphancin-3D from Hyphantria cunea (Fall webworm moth).